The following is a 546-amino-acid chain: Chaperonin GroEL 1 (546 aa).

Residues 30-33 (TLGP), Lys51, 87-91 (DGTTT), Gly415, 479-481 (NAA), and Asp495 each bind ATP.

This sequence belongs to the chaperonin (HSP60) family. Forms a cylinder of 14 subunits composed of two heptameric rings stacked back-to-back. Interacts with the co-chaperonin GroES.

The protein resides in the cytoplasm. The catalysed reaction is ATP + H2O + a folded polypeptide = ADP + phosphate + an unfolded polypeptide.. Functionally, together with its co-chaperonin GroES, plays an essential role in assisting protein folding. The GroEL-GroES system forms a nano-cage that allows encapsulation of the non-native substrate proteins and provides a physical environment optimized to promote and accelerate protein folding. In Paraburkholderia xenovorans (strain LB400), this protein is Chaperonin GroEL 1.